Here is an 87-residue protein sequence, read N- to C-terminus: Small ribosomal subunit protein uS17 (87 aa).

Belongs to the universal ribosomal protein uS17 family. Part of the 30S ribosomal subunit.

Its function is as follows. One of the primary rRNA binding proteins, it binds specifically to the 5'-end of 16S ribosomal RNA. The protein is Small ribosomal subunit protein uS17 of Thiobacillus denitrificans (strain ATCC 25259 / T1).